Consider the following 179-residue polypeptide: Large ribosomal subunit protein uL5 (179 aa).

It belongs to the universal ribosomal protein uL5 family. In terms of assembly, part of the 50S ribosomal subunit; part of the 5S rRNA/L5/L18/L25 subcomplex. Contacts the 5S rRNA and the P site tRNA. Forms a bridge to the 30S subunit in the 70S ribosome.

This is one of the proteins that bind and probably mediate the attachment of the 5S RNA into the large ribosomal subunit, where it forms part of the central protuberance. In the 70S ribosome it contacts protein S13 of the 30S subunit (bridge B1b), connecting the 2 subunits; this bridge is implicated in subunit movement. Contacts the P site tRNA; the 5S rRNA and some of its associated proteins might help stabilize positioning of ribosome-bound tRNAs. This Lysinibacillus sphaericus (strain C3-41) protein is Large ribosomal subunit protein uL5.